The primary structure comprises 305 residues: Ornithine carbamoyltransferase (305 aa).

Residues 52 to 55 (STRT), Q79, R103, and 130 to 133 (HPLQ) contribute to the carbamoyl phosphate site. L-ornithine-binding positions include N162, D224, and 228–229 (SM). Carbamoyl phosphate contacts are provided by residues 264–265 (CL) and R292.

Belongs to the aspartate/ornithine carbamoyltransferase superfamily. OTCase family.

It localises to the cytoplasm. The catalysed reaction is carbamoyl phosphate + L-ornithine = L-citrulline + phosphate + H(+). It participates in amino-acid biosynthesis; L-arginine biosynthesis; L-arginine from L-ornithine and carbamoyl phosphate: step 1/3. Its function is as follows. Reversibly catalyzes the transfer of the carbamoyl group from carbamoyl phosphate (CP) to the N(epsilon) atom of ornithine (ORN) to produce L-citrulline. The polypeptide is Ornithine carbamoyltransferase (Pyrobaculum aerophilum (strain ATCC 51768 / DSM 7523 / JCM 9630 / CIP 104966 / NBRC 100827 / IM2)).